Reading from the N-terminus, the 437-residue chain is GTPase Der (437 aa).

2 consecutive EngA-type G domains span residues 3-168 (PLIA…PCPE) and 178-353 (IKLA…LNRR). GTP contacts are provided by residues 9–16 (GRPNVGKS), 56–60 (DTGGY), 120–123 (NKVD), 184–191 (GRPNVGKS), 231–235 (DTAGL), and 296–299 (NKWD). Positions 354–437 (QKISTSNLNR…IPITMRFLRK (84 aa)) constitute a KH-like domain.

The protein belongs to the TRAFAC class TrmE-Era-EngA-EngB-Septin-like GTPase superfamily. EngA (Der) GTPase family. In terms of assembly, associates with the 50S ribosomal subunit.

GTPase that plays an essential role in the late steps of ribosome biogenesis. The sequence is that of GTPase Der from Chlorobaculum tepidum (strain ATCC 49652 / DSM 12025 / NBRC 103806 / TLS) (Chlorobium tepidum).